The sequence spans 707 residues: Protein MICRORCHIDIA 7 (707 aa).

Basic and acidic residues-rich tracts occupy residues 1–11 (MDNSIHVKREI) and 575–587 (DNRD…DREG). Disordered regions lie at residues 1 to 22 (MDNS…AGFP) and 568 to 619 (EKSA…SGKD). The span at 590–613 (SIKTPTPASDKFYSSSYPNHNGDN) shows a compositional bias: polar residues. Residues 620-701 (GARLQEELRR…NKIKKMEGSK (82 aa)) adopt a coiled-coil conformation. A Nuclear localization signal motif is present at residues 633–640 (RRKALEVE).

It belongs to the MORC ATPase protein family. In terms of assembly, homodimer and heterodimer. Component of an RNA-directed DNA methylation (RdDM) complex. Forms homomeric complexes. Mg(2+) is required as a cofactor. It depends on Mn(2+) as a cofactor.

The protein resides in the nucleus. Its function is as follows. Exhibits ATPase activity. Binds DNA/RNA in a non-specific manner and exhibits endonuclease activity. Probably involved in DNA repair. Involved in RNA-directed DNA methylation (RdDM) as a component of the RdDM machinery and required for gene silencing. May also be involved in the regulation of chromatin architecture to maintain gene silencing. Together with MORC4, acts to suppress a wide set of non-methylated protein-coding genes, especially involved in pathogen response. Positive regulators of defense against the oomycete Hyaloperonospora arabidopsidis (Hpa). This chain is Protein MICRORCHIDIA 7, found in Arabidopsis thaliana (Mouse-ear cress).